We begin with the raw amino-acid sequence, 130 residues long: L-aspartate semialdehyde sulfurtransferase iron-sulfur subunit (130 aa).

4Fe-4S ferredoxin-type domains lie at 72–101 and 102–130; these read RPIH…FDET and WSLC…KLGE. Positions 81, 84, 87, 91, 111, 114, 117, and 121 each coordinate [4Fe-4S] cluster.

May form a complex with MA_1821. The cofactor is [4Fe-4S] cluster.

The protein operates within amino-acid biosynthesis. In terms of biological role, required for O-acetylhomoserine sulfhydrylase (OAHS)-independent homocysteine (Hcy) biosynthesis. Together with MA_1821, catalyzes the condensation of sulfide with aspartate semialdehyde to generate homocysteine. May be involved in the reduction of the disulfide formed in MA_1821. The chain is L-aspartate semialdehyde sulfurtransferase iron-sulfur subunit from Methanosarcina acetivorans (strain ATCC 35395 / DSM 2834 / JCM 12185 / C2A).